Reading from the N-terminus, the 241-residue chain is Enolase-phosphatase E1 (241 aa).

2 residues coordinate Mg(2+): Asp9 and Glu11. Substrate contacts are provided by residues 133–134 (SS) and Lys172. Asp198 is a binding site for Mg(2+).

Belongs to the HAD-like hydrolase superfamily. MasA/MtnC family. In terms of assembly, monomer. It depends on Mg(2+) as a cofactor.

It localises to the cytoplasm. The protein localises to the nucleus. The enzyme catalyses 5-methylsulfanyl-2,3-dioxopentyl phosphate + H2O = 1,2-dihydroxy-5-(methylsulfanyl)pent-1-en-3-one + phosphate. The protein operates within amino-acid biosynthesis; L-methionine biosynthesis via salvage pathway; L-methionine from S-methyl-5-thio-alpha-D-ribose 1-phosphate: step 3/6. It functions in the pathway amino-acid biosynthesis; L-methionine biosynthesis via salvage pathway; L-methionine from S-methyl-5-thio-alpha-D-ribose 1-phosphate: step 4/6. Functionally, bifunctional enzyme that catalyzes the enolization of 2,3-diketo-5-methylthiopentyl-1-phosphate (DK-MTP-1-P) into the intermediate 2-hydroxy-3-keto-5-methylthiopentenyl-1-phosphate (HK-MTPenyl-1-P), which is then dephosphorylated to form the acireductone 1,2-dihydroxy-3-keto-5-methylthiopentene (DHK-MTPene). The protein is Enolase-phosphatase E1 of Scheffersomyces stipitis (strain ATCC 58785 / CBS 6054 / NBRC 10063 / NRRL Y-11545) (Yeast).